The sequence spans 1657 residues: Androglobin (1657 aa).

Residues 1 to 11 (MASKQAKRKEV) are compositionally biased toward basic residues. Disordered regions lie at residues 1-40 (MASK…SFEQ) and 321-398 (TKEN…SSDV). Residues 70–402 (KDKTAKSPIF…RPSSDVQYSM (333 aa)) enclose the Calpain catalytic domain. Basic and acidic residues predominate over residues 321-386 (TKENKDGKDG…DGEKEKEKFK (66 aa)). A Globin; C-terminal part domain is found at 762-889 (HVCSMTTFVI…EDVSLAEWVD (128 aa)). 2 residues coordinate heme b: Q791 and H823. The region spanning 905-934 (EIAAAVKIQSMWKGCYVRLLMKARKPETKE) is the IQ domain. The 33-residue stretch at 935 to 967 (NVTVADTLQKIWAVLEMNLEQYALSLLRLMFKS) folds into the Globin; N-terminal part domain. Disordered stretches follow at residues 1184 to 1226 (SKQV…TDTG), 1288 to 1356 (KHEE…QEDP), 1422 to 1459 (TTDT…ADIK), and 1638 to 1657 (IEKK…GKKK). Positions 1321–1336 (EKSAEKEKLAKEKQAP) are enriched in basic and acidic residues. 2 stretches are compositionally biased toward polar residues: residues 1341–1351 (QQVQMPTAVHS) and 1422–1443 (TTDT…SQTK). A coiled-coil region spans residues 1585–1640 (DEVLEMYGEMRDSVDEARQKILDIREVYRNKLLEAERLRMEALAAQEAAVKIEIEK).

The protein in the central section; belongs to the globin family. This sequence in the N-terminal section; belongs to the peptidase C2 family. Interacts with septin SEPT10; contributes to in vitro proteolytic cleavage of SEPT10 in a calmodulin-dependent manner. Interacts with CFAP69. Interacts with SPEF2. May interact with calmodulin. As to expression, strongly expressed in testis and lung. Weakly expressed in heart, brain, spleen, kidney and tongue.

It localises to the cell projection. Its subcellular location is the cilium. The protein resides in the flagellum. Functionally, probable chimeric globin with a bis-histidyl six-coordinate heme-iron atom through which it could bind dioxygen, carbon monoxide and nitric oxide. Required for sperm flagellum formation and maturation of elongating spermatids, thus playing an essential role in male fertility. The chain is Androglobin from Mus musculus (Mouse).